The chain runs to 145 residues: D-aminoacyl-tRNA deacylase (145 aa).

The Gly-cisPro motif, important for rejection of L-amino acids signature appears at 137–138 (GP).

This sequence belongs to the DTD family. Homodimer.

The protein localises to the cytoplasm. The enzyme catalyses glycyl-tRNA(Ala) + H2O = tRNA(Ala) + glycine + H(+). It catalyses the reaction a D-aminoacyl-tRNA + H2O = a tRNA + a D-alpha-amino acid + H(+). An aminoacyl-tRNA editing enzyme that deacylates mischarged D-aminoacyl-tRNAs. Also deacylates mischarged glycyl-tRNA(Ala), protecting cells against glycine mischarging by AlaRS. Acts via tRNA-based rather than protein-based catalysis; rejects L-amino acids rather than detecting D-amino acids in the active site. By recycling D-aminoacyl-tRNA to D-amino acids and free tRNA molecules, this enzyme counteracts the toxicity associated with the formation of D-aminoacyl-tRNA entities in vivo and helps enforce protein L-homochirality. This is D-aminoacyl-tRNA deacylase from Salmonella paratyphi C (strain RKS4594).